We begin with the raw amino-acid sequence, 126 residues long: Plastocyanin (126 aa).

Positions 1–28 (MSKKFLTILAGLLLVVSSFFLSVSPAAA) are cleaved as a signal peptide. The region spanning 29–126 (ANATVKMGSD…AGMVGKVVVE (98 aa)) is the Plastocyanin-like domain. Cu cation contacts are provided by His-67, Cys-111, His-114, and Met-119.

This sequence belongs to the plastocyanin family. Cu(2+) is required as a cofactor.

It is found in the cellular thylakoid membrane. Functionally, participates in electron transfer between P700 and the cytochrome b6-f complex in photosystem I. This Synechocystis sp. (strain ATCC 27184 / PCC 6803 / Kazusa) protein is Plastocyanin (petE).